The primary structure comprises 135 residues: Small ribosomal subunit protein uS12 (135 aa).

Residues 1 to 24 are disordered; it reads MPTINQLVRKGRHSKTTKSKSPAL. Over residues 9–18 the composition is skewed to basic residues; the sequence is RKGRHSKTTK. Aspartate 102 carries the post-translational modification 3-methylthioaspartic acid.

Belongs to the universal ribosomal protein uS12 family. In terms of assembly, part of the 30S ribosomal subunit. Contacts proteins S8 and S17. May interact with IF1 in the 30S initiation complex.

Its function is as follows. With S4 and S5 plays an important role in translational accuracy. Functionally, interacts with and stabilizes bases of the 16S rRNA that are involved in tRNA selection in the A site and with the mRNA backbone. Located at the interface of the 30S and 50S subunits, it traverses the body of the 30S subunit contacting proteins on the other side and probably holding the rRNA structure together. The combined cluster of proteins S8, S12 and S17 appears to hold together the shoulder and platform of the 30S subunit. This is Small ribosomal subunit protein uS12 from Lactobacillus delbrueckii subsp. bulgaricus (strain ATCC 11842 / DSM 20081 / BCRC 10696 / JCM 1002 / NBRC 13953 / NCIMB 11778 / NCTC 12712 / WDCM 00102 / Lb 14).